A 68-amino-acid polypeptide reads, in one-letter code: Copper transport protein ATOX1 (68 aa).

The HMA domain maps to Met-1–Ser-63. Cu cation is bound by residues Cys-12 and Cys-15. Residue Ser-47 is modified to Phosphoserine. Residue Lys-60 is modified to N6-acetyllysine.

Belongs to the ATX1 family. As to quaternary structure, homodimer. Interacts with ATP7B. Interacts with ATP7A. Interacts (via dimer form) with SLC31A1 (via C-terminal domain); this interaction improves ATOX1 stability and controls intracellular Cu(I) levels.

Functionally, binds and deliver cytosolic copper to the copper ATPase proteins. May be important in cellular antioxidant defense. This is Copper transport protein ATOX1 from Rattus norvegicus (Rat).